A 462-amino-acid chain; its full sequence is Argininosuccinate lyase (462 aa).

Belongs to the lyase 1 family. Argininosuccinate lyase subfamily.

The protein resides in the cytoplasm. It catalyses the reaction 2-(N(omega)-L-arginino)succinate = fumarate + L-arginine. It functions in the pathway amino-acid biosynthesis; L-arginine biosynthesis; L-arginine from L-ornithine and carbamoyl phosphate: step 3/3. The polypeptide is Argininosuccinate lyase (Methylobacterium sp. (strain 4-46)).